Reading from the N-terminus, the 354-residue chain is Dihydroflavonol 4-reductase (354 aa).

Positions 44 and 163 each coordinate NADP(+).

It belongs to the NAD(P)-dependent epimerase/dehydratase family. Dihydroflavonol-4-reductase subfamily.

The catalysed reaction is a (2R,3S,4S)-leucoanthocyanidin + NADP(+) = a (2R,3R)-dihydroflavonol + NADPH + H(+). It carries out the reaction (2S)-flavan-4-ol + NADP(+) = (2S)-flavanone + NADPH + H(+). It participates in pigment biosynthesis; anthocyanin biosynthesis. Bifunctional enzyme involved in flavonoid metabolism. The chain is Dihydroflavonol 4-reductase (ANT18) from Hordeum vulgare (Barley).